Consider the following 240-residue polypeptide: UPF0502 protein Veis_2102 (240 aa).

Belongs to the UPF0502 family.

The protein is UPF0502 protein Veis_2102 of Verminephrobacter eiseniae (strain EF01-2).